A 205-amino-acid chain; its full sequence is MKSYTSLLAVAILCLFGGVNGACTKNAIAQTGFNKDKYFNGDVWYVTDYLDLEPDDVPKRYCAALAAGTASGKLKEALYHYDPKTQDTFYDVSELQVESLGKYTANFKKVDKNGNVKVAVTAGNYYTFTVMYADDSSALIHTCLHKGNKDLGDLYAVLNRNKDAAAGDKVKSAVSAATLEFSKFISTKENNCAYDNDSLKSLLTK.

A signal peptide spans 1–21 (MKSYTSLLAVAILCLFGGVNG). Cystine bridges form between Cys-23-Cys-143 and Cys-62-Cys-192. His-80 provides a ligand contact to heme.

The protein belongs to the calycin superfamily. Nitrophorin family. The cofactor is heme b. As to expression, salivary gland (at protein level).

It is found in the secreted. The catalysed reaction is 3 nitrite + 2 H(+) = 2 nitric oxide + nitrate + H2O. Its function is as follows. Heme-based protein that delivers nitric oxide gas (NO) to the victim while feeding, resulting in vasodilation and inhibition of platelet aggregation. Reversibly binds nitric oxide (NO). Also binds tightly to histamine, which is released by the host to induce wound healing. NO release is pH dependent and linked to loop dynamics. The polypeptide is Nitrophorin-4 (Rhodnius prolixus (Triatomid bug)).